The following is a 546-amino-acid chain: Apolipoprotein N-acyltransferase 1 (546 aa).

7 helical membrane passes run 14 to 34, 41 to 61, 62 to 82, 85 to 105, 122 to 142, 151 to 171, and 194 to 214; these read FLLF…PLLP, AYGA…FAVV, FWGG…LFVF, VALC…CLAL, LVWL…PYGV, LPLI…LVVF, and FLSA…LCGF. The CN hydrolase domain occupies 233–502; it reads AKVALVQPNG…PGVLVADVPI (270 aa). Catalysis depends on glutamate 280, which acts as the Proton acceptor. Lysine 361 is an active-site residue. Residue cysteine 413 is the Nucleophile of the active site. Residues 514–534 traverse the membrane as a helical segment; the sequence is GDALGVFFCVASLFILIAGGV.

It belongs to the CN hydrolase family. Apolipoprotein N-acyltransferase subfamily.

The protein resides in the cell inner membrane. The enzyme catalyses N-terminal S-1,2-diacyl-sn-glyceryl-L-cysteinyl-[lipoprotein] + a glycerophospholipid = N-acyl-S-1,2-diacyl-sn-glyceryl-L-cysteinyl-[lipoprotein] + a 2-acyl-sn-glycero-3-phospholipid + H(+). The protein operates within protein modification; lipoprotein biosynthesis (N-acyl transfer). Catalyzes the phospholipid dependent N-acylation of the N-terminal cysteine of apolipoprotein, the last step in lipoprotein maturation. The protein is Apolipoprotein N-acyltransferase 1 of Treponema pallidum (strain Nichols).